We begin with the raw amino-acid sequence, 324 residues long: MIFSKISQVAHYVPQQLVTNNDLASIMDTSHEWIFSRTGIAERHISRDEMTSDLAIQVADQLLTQSGLKADAIDFIIVATISPDATMPSTAAKVQAAIAATSAFAFDMTAACSGFVFALAMADKLIASGAYQNGMVIGAETLSKLVNWQDRATAVLFGDGAGGVLLEASKDKHVLAEPLHTDGARCQSLISGETSLSSPYSIGKKAIATIQMDGRAIFDFAIRDVSKSILTLMAQSDITKDDIDYCLLHQANRRILDKIARKIDVPREKFLENMMRYGNTSAASIPILLSEAVQKGQIRLDGTQKILLSGFGGGLTWGSLIVKI.

Active-site residues include C112 and H249. The segment at 250 to 254 (QANRR) is ACP-binding. Residue N279 is part of the active site.

The protein belongs to the thiolase-like superfamily. FabH family. As to quaternary structure, homodimer.

It is found in the cytoplasm. The enzyme catalyses malonyl-[ACP] + acetyl-CoA + H(+) = 3-oxobutanoyl-[ACP] + CO2 + CoA. The protein operates within lipid metabolism; fatty acid biosynthesis. Catalyzes the condensation reaction of fatty acid synthesis by the addition to an acyl acceptor of two carbons from malonyl-ACP. Catalyzes the first condensation reaction which initiates fatty acid synthesis and may therefore play a role in governing the total rate of fatty acid production. Possesses both acetoacetyl-ACP synthase and acetyl transacylase activities. Its substrate specificity determines the biosynthesis of branched-chain and/or straight-chain of fatty acids. This is Beta-ketoacyl-[acyl-carrier-protein] synthase III from Streptococcus pyogenes serotype M49 (strain NZ131).